The chain runs to 245 residues: tRNA1(Val) (adenine(37)-N6)-methyltransferase (245 aa).

The protein belongs to the methyltransferase superfamily. tRNA (adenine-N(6)-)-methyltransferase family.

The protein resides in the cytoplasm. It carries out the reaction adenosine(37) in tRNA1(Val) + S-adenosyl-L-methionine = N(6)-methyladenosine(37) in tRNA1(Val) + S-adenosyl-L-homocysteine + H(+). Its function is as follows. Specifically methylates the adenine in position 37 of tRNA(1)(Val) (anticodon cmo5UAC). The sequence is that of tRNA1(Val) (adenine(37)-N6)-methyltransferase from Shigella dysenteriae serotype 1 (strain Sd197).